Consider the following 922-residue polypeptide: Coronin-7 (922 aa).

WD repeat units follow at residues 75 to 115 (CHSD…EALP), 124 to 163 (PEELPVDVLQFHPTADGVLVSTAGRTVKVWDVAKQQHLTE), 166 to 205 (AHKDLVQSAVWSRDGATVGTACKDKQLRIFDPRARAQASQ), and 209 to 253 (AHEN…SALA). The segment at 386 to 462 (NPAHRPHPRF…TSPSQRSLQS (77 aa)) is disordered. Low complexity predominate over residues 423–456 (SEGFSSPSSLVSPSTPSSLGLSLSSTSGIGTSPS). 2 positions are modified to phosphoserine: S459 and S462. Residue K469 forms a Glycyl lysine isopeptide (Lys-Gly) (interchain with G-Cter in ubiquitin) linkage. 4 WD repeats span residues 539-579 (QNGA…LKNV), 589-629 (GHTE…EQLR), 632-671 (GHQDQIFSLAWSPDGKQLATVCKDGRVRVYDPRSSPLPLQ), and 725-765 (DVAP…PFFL). The segment at 854 to 922 (LQPPGMTPVS…FEGVDEDEWD (69 aa)) is disordered. Position 874 is a phosphothreonine (T874). Positions 881-893 (LEEKSDQQKKEEL) are enriched in basic and acidic residues. At S912 the chain carries Phosphoserine.

It belongs to the WD repeat coronin family. As to quaternary structure, interacts with clathrin adapter AP1 complex. This interaction takes place at Golgi membranes and not AP1-positive endosomal membranes. Interacts (when ubiquitinated at Lys-469) with EPS15. In terms of processing, the membrane-associated form is phosphorylated on tyrosine residues. Post-translationally, ubiquitinated via 'Lys-33'-linked ubiquitin chains by the BCR(KLHL20) E3 ubiquitin ligase complex: 'Lys-33'-linked ubiquitination promotes interaction with EPS15 and facilitates actin polymerization at the trans-Golgi network, thereby facilitating post-Golgi trafficking. Deubiquitinated by ZRANB1/TRABID.

It is found in the golgi apparatus membrane. It localises to the golgi apparatus. Its subcellular location is the trans-Golgi network. The protein localises to the cytoplasmic vesicle. The protein resides in the cytoplasm. It is found in the cytosol. In terms of biological role, F-actin regulator involved in anterograde Golgi to endosome transport: upon ubiquitination via 'Lys-33'-linked ubiquitin chains by the BCR(KLHL20) E3 ubiquitin ligase complex, interacts with EPS15 and localizes to the trans-Golgi network, where it promotes actin polymerization, thereby facilitating post-Golgi trafficking. May play a role in the maintenance of the Golgi apparatus morphology. This Rattus norvegicus (Rat) protein is Coronin-7 (Coro7).